Reading from the N-terminus, the 83-residue chain is Envelope small membrane protein (83 aa).

The Virion surface portion of the chain corresponds to 1–16; sequence MFNLFLTDTVWYVGQI. Residues 17-37 form a helical membrane-spanning segment; sequence IFIFAVCLMVTIIVVAFLASI. Over 38–79 the chain is Intravirion; it reads KLCIQLCGLCNTLVLSPSIYLYDRSKQLYKYYNEEMRLPLLE.

It belongs to the betacoronaviruses E protein family. Homopentamer. Interacts with membrane protein M in the budding compartment of the host cell, which is located between endoplasmic reticulum and the Golgi complex. Interacts with Nucleoprotein.

The protein resides in the host Golgi apparatus membrane. Component of the viral envelope that plays a central role in virus morphogenesis and assembly. It is sufficient to form virus-like particles. Seems to be important for creating the membrane curvature needed to acquire the rounded, stable and infectious particle phenotype. Acts as a viroporin, inducing the formation of hydrophilic pores in cellular membranes. Also induces apoptosis. Its function is as follows. Plays a central role in virus morphogenesis and assembly. Acts as a viroporin and self-assembles in host membranes forming pentameric protein-lipid pores that allow ion transport. Also plays a role in the induction of apoptosis. The protein is Envelope small membrane protein of Mus musculus (Mouse).